The chain runs to 259 residues: Hydroxyethylthiazole kinase 1 (259 aa).

M38 contacts substrate. Residues R113 and S158 each coordinate ATP. G185 serves as a coordination point for substrate.

It belongs to the Thz kinase family. It depends on Mg(2+) as a cofactor.

The catalysed reaction is 5-(2-hydroxyethyl)-4-methylthiazole + ATP = 4-methyl-5-(2-phosphooxyethyl)-thiazole + ADP + H(+). The protein operates within cofactor biosynthesis; thiamine diphosphate biosynthesis; 4-methyl-5-(2-phosphoethyl)-thiazole from 5-(2-hydroxyethyl)-4-methylthiazole: step 1/1. Functionally, catalyzes the phosphorylation of the hydroxyl group of 4-methyl-5-beta-hydroxyethylthiazole (THZ). The protein is Hydroxyethylthiazole kinase 1 of Leuconostoc mesenteroides subsp. mesenteroides (strain ATCC 8293 / DSM 20343 / BCRC 11652 / CCM 1803 / JCM 6124 / NCDO 523 / NBRC 100496 / NCIMB 8023 / NCTC 12954 / NRRL B-1118 / 37Y).